An 871-amino-acid polypeptide reads, in one-letter code: DNA mismatch repair protein MutS 1 (871 aa).

614–621 (GPNMSGKS) contacts ATP.

It belongs to the DNA mismatch repair MutS family.

Its function is as follows. This protein is involved in the repair of mismatches in DNA. It is possible that it carries out the mismatch recognition step. This protein has a weak ATPase activity. The polypeptide is DNA mismatch repair protein MutS 1 (Halobacterium salinarum (strain ATCC 29341 / DSM 671 / R1)).